A 554-amino-acid chain; its full sequence is Carboxypeptidase Y homolog A (554 aa).

Positions 1 to 17 are cleaved as a signal peptide; sequence MRIAASTVLFGAASAAS. A propeptide spanning residues 18 to 137 is cleaved from the precursor; sequence FQQQAQHVLS…RLEEYNLRVK (120 aa). Intrachain disulfides connect cysteine 191–cysteine 431, cysteine 325–cysteine 339, cysteine 349–cysteine 372, cysteine 356–cysteine 365, and cysteine 394–cysteine 401. A glycan (N-linked (GlcNAc...) asparagine) is linked at asparagine 222. Serine 278 is an active-site residue. Aspartate 470 is an active-site residue. Residue asparagine 518 is glycosylated (N-linked (GlcNAc...) asparagine). Residue histidine 529 is part of the active site.

Belongs to the peptidase S10 family.

It localises to the vacuole. The enzyme catalyses Release of a C-terminal amino acid with broad specificity.. In terms of biological role, vacuolar carboxypeptidase involved in degradation of small peptides. Digests preferentially peptides containing an aliphatic or hydrophobic residue in P1' position, as well as methionine, leucine or phenylalanine in P1 position of ester substrate. The protein is Carboxypeptidase Y homolog A (CPYA) of Chaetomium globosum (strain ATCC 6205 / CBS 148.51 / DSM 1962 / NBRC 6347 / NRRL 1970) (Soil fungus).